We begin with the raw amino-acid sequence, 575 residues long: Cytochrome P450 monooxygenase opaB (575 aa).

Asn6 carries an N-linked (GlcNAc...) asparagine glycan. A helical membrane pass occupies residues 37–57 (FILAAILASIILLIIRNSMLS). 2 N-linked (GlcNAc...) asparagine glycosylation sites follow: Asn83 and Asn242. Cys521 contacts heme.

It belongs to the cytochrome P450 family. Requires heme as cofactor.

It is found in the membrane. The protein operates within secondary metabolite biosynthesis. Its function is as follows. Cytochrome P450 monooxygenase; part of the gene cluster that mediates the biosynthesis of oxepinamides, derivatives of anthranilyl-containing tripeptides that share an oxepin ring and a fused pyrimidinone moiety. The nonribosomal peptide synthetase (NRPS) opaA assembles the quinazolinone core with D-Phe incorporation. The first adenylation domain (A1) of opaA loads and activates anthranilic acid whereas the second A domain (A2) is for activating of L-Phe, which is then converted to D-form by the E domain. The third A domain (A3) is responsible for L-Ile activation and the terminal condensation domain C3 for cyclization and releasing the NRPS product protuboxepin K. The cytochrome P450 monooxygenase opaB then catalyzes alone the oxepin ring formation to convert protuboxepin K into protuboxepin A. The flavoenzyme opaC installs subsequently one hydroxyl group at the oxepin ring, accompanied by double bond migration, to form 15-epi-oxepinamide E. The epimerase opaE changes the D-Phe residue back to L-form, leading to oxepinamide E, which is further methylated at the hydroxyl group at C-12 by the O-methyltransferase OpaF to yield oxepinamide F. This is Cytochrome P450 monooxygenase opaB from Aspergillus ustus.